Reading from the N-terminus, the 490-residue chain is Glutamyl-tRNA(Gln) amidotransferase subunit A (490 aa).

Catalysis depends on charge relay system residues Lys-76 and Ser-151. Ser-175 serves as the catalytic Acyl-ester intermediate.

Belongs to the amidase family. GatA subfamily. In terms of assembly, heterotrimer of A, B and C subunits.

It catalyses the reaction L-glutamyl-tRNA(Gln) + L-glutamine + ATP + H2O = L-glutaminyl-tRNA(Gln) + L-glutamate + ADP + phosphate + H(+). In terms of biological role, allows the formation of correctly charged Gln-tRNA(Gln) through the transamidation of misacylated Glu-tRNA(Gln) in organisms which lack glutaminyl-tRNA synthetase. The reaction takes place in the presence of glutamine and ATP through an activated gamma-phospho-Glu-tRNA(Gln). In Aromatoleum aromaticum (strain DSM 19018 / LMG 30748 / EbN1) (Azoarcus sp. (strain EbN1)), this protein is Glutamyl-tRNA(Gln) amidotransferase subunit A.